Consider the following 166-residue polypeptide: uncharacterized protein (166 aa).

It to M.jannaschii MJ0992.

This is an uncharacterized protein from Methanocaldococcus jannaschii (strain ATCC 43067 / DSM 2661 / JAL-1 / JCM 10045 / NBRC 100440) (Methanococcus jannaschii).